Here is a 337-residue protein sequence, read N- to C-terminus: Inositol 2-dehydrogenase 1 (337 aa).

This sequence belongs to the Gfo/Idh/MocA family. In terms of assembly, homotetramer.

The enzyme catalyses myo-inositol + NAD(+) = scyllo-inosose + NADH + H(+). Involved in the oxidation of myo-inositol (MI) to 2-keto-myo-inositol (2KMI or 2-inosose). In Saccharopolyspora erythraea (strain ATCC 11635 / DSM 40517 / JCM 4748 / NBRC 13426 / NCIMB 8594 / NRRL 2338), this protein is Inositol 2-dehydrogenase 1.